The chain runs to 150 residues: Arginine repressor (150 aa).

The protein belongs to the ArgR family.

It localises to the cytoplasm. It participates in amino-acid biosynthesis; L-arginine biosynthesis [regulation]. Regulates arginine biosynthesis genes. The polypeptide is Arginine repressor (Clostridium kluyveri (strain NBRC 12016)).